We begin with the raw amino-acid sequence, 796 residues long: Protein tyrosine phosphatase domain-containing protein 1 (796 aa).

The Tyrosine-protein phosphatase domain maps to 126–297 (YSSWVTDNIL…LIPLRNIFSC (172 aa)). Catalysis depends on Cys234, which acts as the Phosphocysteine intermediate. Ser435 and Ser437 each carry phosphoserine.

The protein belongs to the protein-tyrosine phosphatase family. Non-receptor class PTPDC1 subfamily.

Functionally, may play roles in cilia formation and/or maintenance. The sequence is that of Protein tyrosine phosphatase domain-containing protein 1 (PTPDC1) from Bos taurus (Bovine).